The sequence spans 93 residues: Small ribosomal subunit protein uS19 (93 aa).

It belongs to the universal ribosomal protein uS19 family.

Its function is as follows. Protein S19 forms a complex with S13 that binds strongly to the 16S ribosomal RNA. The polypeptide is Small ribosomal subunit protein uS19 (Renibacterium salmoninarum (strain ATCC 33209 / DSM 20767 / JCM 11484 / NBRC 15589 / NCIMB 2235)).